We begin with the raw amino-acid sequence, 178 residues long: ATP synthase subunit delta (178 aa).

It belongs to the ATPase delta chain family. F-type ATPases have 2 components, F(1) - the catalytic core - and F(0) - the membrane proton channel. F(1) has five subunits: alpha(3), beta(3), gamma(1), delta(1), epsilon(1). F(0) has three main subunits: a(1), b(2) and c(10-14). The alpha and beta chains form an alternating ring which encloses part of the gamma chain. F(1) is attached to F(0) by a central stalk formed by the gamma and epsilon chains, while a peripheral stalk is formed by the delta and b chains.

The protein resides in the cell inner membrane. F(1)F(0) ATP synthase produces ATP from ADP in the presence of a proton or sodium gradient. F-type ATPases consist of two structural domains, F(1) containing the extramembraneous catalytic core and F(0) containing the membrane proton channel, linked together by a central stalk and a peripheral stalk. During catalysis, ATP synthesis in the catalytic domain of F(1) is coupled via a rotary mechanism of the central stalk subunits to proton translocation. Its function is as follows. This protein is part of the stalk that links CF(0) to CF(1). It either transmits conformational changes from CF(0) to CF(1) or is implicated in proton conduction. This chain is ATP synthase subunit delta, found in Ectopseudomonas mendocina (strain ymp) (Pseudomonas mendocina).